The following is a 236-amino-acid chain: Orotidine 5'-phosphate decarboxylase (236 aa).

Residues D14, K36, D63 to T72, T122, R183, Q192, G212, and R213 contribute to the substrate site. K65 acts as the Proton donor in catalysis.

The protein belongs to the OMP decarboxylase family. Type 1 subfamily. Homodimer.

It carries out the reaction orotidine 5'-phosphate + H(+) = UMP + CO2. It functions in the pathway pyrimidine metabolism; UMP biosynthesis via de novo pathway; UMP from orotate: step 2/2. In terms of biological role, catalyzes the decarboxylation of orotidine 5'-monophosphate (OMP) to uridine 5'-monophosphate (UMP). This Halorhodospira halophila (strain DSM 244 / SL1) (Ectothiorhodospira halophila (strain DSM 244 / SL1)) protein is Orotidine 5'-phosphate decarboxylase.